The following is a 75-amino-acid chain: METRFPQQSQQTPASTNRRRPFKHEDYPCRRQQRSSTLYVLIFLAIFLSKFTNQLLLSLLEAVIRTVTTLQQLLT.

Polar residues predominate over residues 1-16; that stretch reads METRFPQQSQQTPAST. The disordered stretch occupies residues 1 to 29; the sequence is METRFPQQSQQTPASTNRRRPFKHEDYPC. The chain crosses the membrane as a helical span at residues 38–60; the sequence is LYVLIFLAIFLSKFTNQLLLSLL.

It belongs to the Leviviricetes lysis protein family.

It localises to the host cell inner membrane. It is found in the host cell outer membrane. In terms of biological role, induces the formation of specific membrane adhesion sites between the inner and outer membranes, apparently leading to host cell lysis. Lysis may be performed via activation of host murein hydrolases. This is Lysis protein from Escherichia phage MS2 (Bacteriophage MS2).